Reading from the N-terminus, the 323-residue chain is tRNA dimethylallyltransferase (323 aa).

ATP is bound at residue 21-28; that stretch reads GPTACNKS. 23 to 28 provides a ligand contact to substrate; it reads TACNKS. Interaction with substrate tRNA stretches follow at residues 46-49, 171-175, and 252-257; these read DSAL, QRVLR, and RCVGYR.

The protein belongs to the IPP transferase family. Monomer. Mg(2+) serves as cofactor.

The enzyme catalyses adenosine(37) in tRNA + dimethylallyl diphosphate = N(6)-dimethylallyladenosine(37) in tRNA + diphosphate. Functionally, catalyzes the transfer of a dimethylallyl group onto the adenine at position 37 in tRNAs that read codons beginning with uridine, leading to the formation of N6-(dimethylallyl)adenosine (i(6)A). This is tRNA dimethylallyltransferase from Buchnera aphidicola subsp. Baizongia pistaciae (strain Bp).